Consider the following 512-residue polypeptide: mRNA export factor (512 aa).

Over residues methionine 1–leucine 15 the composition is skewed to low complexity. The tract at residues methionine 1–aspartate 243 is disordered. The Nuclear export signal motif lies at isoleucine 5 to aspartate 17. Phosphoserine; by host is present on residues serine 16 and serine 18. Composition is skewed to acidic residues over residues serine 16–glutamate 26 and leucine 35–glutamate 51. The tract at residues valine 104–arginine 112 is interaction with host ALYREF. A Nuclear localization signal motif is present at residues alanine 110 to arginine 138. Serine 114 is modified (phosphoserine; by host). Arginine 138 bears the Dimethylated arginine; by host mark. The RGG-box stretch occupies residues arginine 138–glycine 152. A compositionally biased stretch (basic residues) spans glycine 139–glycine 149. An Omega-N-methylarginine; by host modification is found at arginine 148. Arginine 150 carries the dimethylated arginine; by host modification. Residues alanine 214–proline 233 show a composition bias toward pro residues. Cysteine 400, histidine 479, cysteine 483, and cysteine 488 together coordinate Zn(2+). Residues cysteine 400–cysteine 488 form a CHC2-type zinc finger. Residues tyrosine 500–phenylalanine 512 form an important for homodimerization region.

This sequence belongs to the HHV-1 ICP27 protein family. As to quaternary structure, homodimer. Interacts with host RBP1; this interaction facilitates the RNA polymerase recruitment to viral transcription sites. Interacts (via the RGG box) with host ALYREF/THOC4; this interaction recruits ALYREF to viral replication compartments and probably directs viral mRNA to the TAP/NFX1 pathway. Interacts with host ALYREF2. Interacts (via the RGG box) with host SRPK1; this interaction relocalizes SRPK1 to the nucleus and seems to alter its activity. Interacts with ICP4; this interaction modulates ICP4 DNA-binding activity. Interacts with host NXF1; this interaction allows efficient export of HHV-1 early and late transcripts. In terms of processing, methylated within the RGG box possibly by host PRMT1. When hypomethylated, ICP27 is exported to the cytoplasm earlier and more rapidly. Phosphorylated.

It is found in the host cytoplasm. It localises to the host nucleus. Multifunctional regulator of the expression of viral genes that contributes to the shutoff of host protein synthesis and mediates nuclear export of viral intronless mRNAs. Early in infection, this immediate early (EI) protein mediates the inhibition of cellular splicing. This results in the accumulation of unprocessed 3'end pre-mRNAs which can't be exported from the nucleus. Cellular protein synthesis is thereby shut off early after virus infection. Later in the infection, it helps recruit cellular RNA polymerase II to viral replication sites and promotes the nuclear export of viral intronless mRNAs by interacting with mRNAs and host NXF1/TAP. ICP27 binds to NUP62 which may provide facilitated viral mRNA export and may indirectly compete with some host cell transport receptors for binding and inhibit cellular nucleocytoplasmic transport pathways. Also stimulates translation of viral transcripts. Repression of host gene expression blocks the cell cycle at the G1 phase and prevents apoptosis. Seems to silence the 3' splice site of the promyelocytic leukemia (PML) intron 7a, thereby switching PML isoforms from PML-II to PML-V. This could be linked to the accelerated mRNA export induced by ICP27 which might not provide sufficient time for PML pre-mRNA to be spliced in the nucleus. This chain is mRNA export factor, found in Homo sapiens (Human).